Reading from the N-terminus, the 157-residue chain is Large ribosomal subunit protein uL22 (157 aa).

It belongs to the universal ribosomal protein uL22 family. As to quaternary structure, part of the 50S ribosomal subunit.

Functionally, this protein binds specifically to 23S rRNA. It makes multiple contacts with different domains of the 23S rRNA in the assembled 50S subunit and ribosome. Its function is as follows. The globular domain of the protein is located near the polypeptide exit tunnel on the outside of the subunit, while an extended beta-hairpin is found that lines the wall of the exit tunnel in the center of the 70S ribosome. The protein is Large ribosomal subunit protein uL22 of Staphylothermus marinus (strain ATCC 43588 / DSM 3639 / JCM 9404 / F1).